Reading from the N-terminus, the 174-residue chain is FMN reductase (NADH) SmoA (174 aa).

It belongs to the non-flavoprotein flavin reductase family.

It catalyses the reaction FMNH2 + NAD(+) = FMN + NADH + 2 H(+). Part of the sulfoquinovose monooxygenase (sulfo-SMO) pathway, a D-sulfoquinovose degradation pathway that enables the complete utilization of all carbons within sulfoquinovose (SQ) with concomitant production of inorganic sulfite. Catalyzes the NADH-dependent reduction of FMN. FMNH(2) is then transferred to the sulfoquinovose monooxygenase SmoC. In Agrobacterium fabrum (strain C58 / ATCC 33970) (Agrobacterium tumefaciens (strain C58)), this protein is FMN reductase (NADH) SmoA.